The sequence spans 942 residues: Serine/threonine-protein kinase ATG1 (942 aa).

A Protein kinase domain is found at 11 to 312; sequence YVVEKEIGKG…FEEFFNNKIV (302 aa). Residues 17–25 and K41 each bind ATP; that span reads IGKGSFATV. The active-site Proton acceptor is the D159. Residues 435–452 are compositionally biased toward polar residues; that stretch reads NSSRVNKLDKSNLSGKSD. Disordered stretches follow at residues 435–454, 505–529, and 817–836; these read NSSRVNKLDKSNLSGKSDSS, QPHNDIQNLQRAPSTTSGGTSSRRA, and NSKPGTHNQSPKSKISNDSN. Residues 515-529 show a composition bias toward low complexity; that stretch reads RAPSTTSGGTSSRRA. Residues 819–834 show a composition bias toward polar residues; the sequence is KPGTHNQSPKSKISND.

This sequence belongs to the protein kinase superfamily. Ser/Thr protein kinase family. APG1/unc-51/ULK1 subfamily. As to quaternary structure, homodimer. Forms a ternary complex with ATG13 and ATG17.

It localises to the cytoplasm. It is found in the preautophagosomal structure membrane. It catalyses the reaction L-seryl-[protein] + ATP = O-phospho-L-seryl-[protein] + ADP + H(+). The enzyme catalyses L-threonyl-[protein] + ATP = O-phospho-L-threonyl-[protein] + ADP + H(+). Serine/threonine protein kinase involved in the cytoplasm to vacuole transport (Cvt) and found to be essential in autophagy, where it is required for the formation of autophagosomes. Involved in the clearance of protein aggregates which cannot be efficiently cleared by the proteasome. Required for selective autophagic degradation of the nucleus (nucleophagy) as well as for mitophagy which contributes to regulate mitochondrial quantity and quality by eliminating the mitochondria to a basal level to fulfill cellular energy requirements and preventing excess ROS production. Also involved in endoplasmic reticulum-specific autophagic process, in selective removal of ER-associated degradation (ERAD) substrates. Plays a key role in ATG9 and ATG23 cycling through the pre-autophagosomal structure and is necessary to promote ATG18 binding to ATG9 through phosphorylation of ATG9. Catalyzes phosphorylation of ATG4, decreasing the interaction between ATG4 and ATG8 and impairing deconjugation of PE-conjugated forms of ATG8. Contributes to virulence by conferring resistance to unstable nutrient environments and immune defense of hosts. The chain is Serine/threonine-protein kinase ATG1 from Candida glabrata (strain ATCC 2001 / BCRC 20586 / JCM 3761 / NBRC 0622 / NRRL Y-65 / CBS 138) (Yeast).